The chain runs to 492 residues: Fibroblast growth factor receptor substrate 3 (492 aa).

Gly-2 carries the N-myristoyl glycine lipid modification. The 103-residue stretch at 13–115 folds into the IRS-type PTB domain; that stretch reads VPDNHPTKFK…QCNSINVMEE (103 aa). Disordered regions lie at residues 153 to 173, 338 to 455, and 467 to 492; these read GEGP…RHPS, QLGG…SDSY, and SNLQ…DLPL.

Binds NTRK1. Binds FGFR1, NGFR, GRB2, PTPN11 and ERK2. Post-translationally, phosphorylated by ULK2 in vitro. Phosphorylated on tyrosine residues upon stimulation by BFGF or NGFB.

The protein localises to the membrane. Functionally, adapter protein that links FGF and NGF receptors to downstream signaling pathways. Involved in the activation of MAP kinases. Down-regulates ERK2 signaling by interfering with the phosphorylation and nuclear translocation of ERK2. This Homo sapiens (Human) protein is Fibroblast growth factor receptor substrate 3 (FRS3).